Here is a 55-residue protein sequence, read N- to C-terminus: Large ribosomal subunit protein bL33B (55 aa).

The protein belongs to the bacterial ribosomal protein bL33 family.

In Mycolicibacterium paratuberculosis (strain ATCC BAA-968 / K-10) (Mycobacterium paratuberculosis), this protein is Large ribosomal subunit protein bL33B.